A 33-amino-acid polypeptide reads, in one-letter code: Alpha-amanitin proprotein (33 aa).

A propeptide spanning residues 1-10 (MSDINATRLP) is cleaved from the precursor. A (3R,4R)-4,5-dihydroxyisoleucine; in form alpha-amanitin modification is found at Ile-11. Residue Ile-11 is modified to (3R,4S)-4-hydroxyisoleucine; in form gamma-amanitin. The segment at residues 11 to 18 (IWGIGCNP) is a cross-link (cyclopeptide (Ile-Pro)). Positions 12–16 (WGIGC) form a cross-link, 2'-cysteinyl-6'-hydroxytryptophan sulfoxide (Trp-Cys). Position 18 is a 4-hydroxyproline (Pro-18). The propeptide occupies 19 to 33 (SVGDEVTALLTSGEA).

This sequence belongs to the MSDIN fungal toxin family. In terms of processing, processed by the macrocyclase-peptidase enzyme POPB to yield a toxic cyclic decapeptide. POPB first removes 10 residues from the N-terminus. Conformational trapping of the remaining peptide forces the enzyme to release this intermediate rather than proceed to macrocyclization. The enzyme rebinds the remaining peptide in a different conformation and catalyzes macrocyclization of the N-terminal 8 residues.

Its function is as follows. Major toxin belonging to the bicyclic octapeptides amatoxins that acts by binding non-competitively to RNA polymerase II and greatly slowing the elongation of transcripts from target promoters. This chain is Alpha-amanitin proprotein, found in Amanita fuliginea (East Asian brown death cap).